Reading from the N-terminus, the 214-residue chain is Phosphatidylserine decarboxylase proenzyme (214 aa).

Ser-182 serves as the catalytic Schiff-base intermediate with substrate; via pyruvic acid. Ser-182 carries the pyruvic acid (Ser); by autocatalysis modification.

The protein belongs to the phosphatidylserine decarboxylase family. PSD-A subfamily. In terms of assembly, heterodimer of a large membrane-associated beta subunit and a small pyruvoyl-containing alpha subunit. Pyruvate is required as a cofactor. Post-translationally, is synthesized initially as an inactive proenzyme. Formation of the active enzyme involves a self-maturation process in which the active site pyruvoyl group is generated from an internal serine residue via an autocatalytic post-translational modification. Two non-identical subunits are generated from the proenzyme in this reaction, and the pyruvate is formed at the N-terminus of the alpha chain, which is derived from the carboxyl end of the proenzyme. The post-translation cleavage follows an unusual pathway, termed non-hydrolytic serinolysis, in which the side chain hydroxyl group of the serine supplies its oxygen atom to form the C-terminus of the beta chain, while the remainder of the serine residue undergoes an oxidative deamination to produce ammonia and the pyruvoyl prosthetic group on the alpha chain.

It localises to the cell membrane. The catalysed reaction is a 1,2-diacyl-sn-glycero-3-phospho-L-serine + H(+) = a 1,2-diacyl-sn-glycero-3-phosphoethanolamine + CO2. Its pathway is phospholipid metabolism; phosphatidylethanolamine biosynthesis; phosphatidylethanolamine from CDP-diacylglycerol: step 2/2. Functionally, catalyzes the formation of phosphatidylethanolamine (PtdEtn) from phosphatidylserine (PtdSer). This is Phosphatidylserine decarboxylase proenzyme from Burkholderia multivorans (strain ATCC 17616 / 249).